The primary structure comprises 153 residues: Riboflavin synthase (153 aa).

This sequence belongs to the DMRL synthase family.

It carries out the reaction 2 6,7-dimethyl-8-(1-D-ribityl)lumazine + H(+) = 5-amino-6-(D-ribitylamino)uracil + riboflavin. It functions in the pathway cofactor biosynthesis; riboflavin biosynthesis; riboflavin from 2-hydroxy-3-oxobutyl phosphate and 5-amino-6-(D-ribitylamino)uracil: step 2/2. In Archaeoglobus fulgidus (strain ATCC 49558 / DSM 4304 / JCM 9628 / NBRC 100126 / VC-16), this protein is Riboflavin synthase (ribC).